A 300-amino-acid chain; its full sequence is tRNA U34 carboxymethyltransferase (300 aa).

Carboxy-S-adenosyl-L-methionine contacts are provided by residues Lys73, Trp87, Lys92, Gly111, 133-135, 160-161, Tyr180, and Arg293; these read DPS and VE.

It belongs to the class I-like SAM-binding methyltransferase superfamily. CmoB family. Homotetramer.

The enzyme catalyses carboxy-S-adenosyl-L-methionine + 5-hydroxyuridine(34) in tRNA = 5-carboxymethoxyuridine(34) in tRNA + S-adenosyl-L-homocysteine + H(+). In terms of biological role, catalyzes carboxymethyl transfer from carboxy-S-adenosyl-L-methionine (Cx-SAM) to 5-hydroxyuridine (ho5U) to form 5-carboxymethoxyuridine (cmo5U) at position 34 in tRNAs. This is tRNA U34 carboxymethyltransferase from Nautilia profundicola (strain ATCC BAA-1463 / DSM 18972 / AmH).